Here is a 480-residue protein sequence, read N- to C-terminus: Endothelial transcription factor GATA-2 (480 aa).

Ser73 is modified (phosphoserine). Arg86 carries the post-translational modification Asymmetric dimethylarginine. Positions 166–208 are disordered; it reads SGSHLFGFPPTPPKEVSPDPSTTGAASPASSSAGGSVARGEDK. The segment covering 183 to 201 has biased composition (low complexity); that stretch reads PDPSTTGAASPASSSAGGS. A Phosphoserine modification is found at Ser192. GATA-type zinc fingers lie at residues 295–319 and 349–373; these read CVNC…CNAC and CANC…CNAC. Residue Lys389 forms a Glycyl lysine isopeptide (Lys-Gly) (interchain with G-Cter in SUMO2) linkage. The segment at 457-480 is disordered; it reads TPIHPSSSLSFGHPHPSSMVTAMG.

In terms of assembly, interacts with BRD3. Interacts with AR and CCAR1. Interacts with MDFIC.

It is found in the nucleus. Functionally, transcriptional activator which regulates endothelin-1 gene expression in endothelial cells. Binds to the consensus sequence 5'-AGATAG-3'. This Mus musculus (Mouse) protein is Endothelial transcription factor GATA-2 (Gata2).